The following is a 101-amino-acid chain: Small ribosomal subunit protein uS14 (101 aa).

The protein belongs to the universal ribosomal protein uS14 family. In terms of assembly, part of the 30S ribosomal subunit. Contacts proteins S3 and S10.

In terms of biological role, binds 16S rRNA, required for the assembly of 30S particles and may also be responsible for determining the conformation of the 16S rRNA at the A site. This is Small ribosomal subunit protein uS14 from Dechloromonas aromatica (strain RCB).